The primary structure comprises 889 residues: MKSAEIARRFLAFFEKNGHTVVPSASLIAEDPTLLLVNAGMVPFKPYFLGQRTPPYPRATSVQKCVRTIDIDEVGKTTRHASFFQMLGNFSFGDYFKEKAIPLAWELLTTSVADGGFGFDPERLWVTVYLDDDEAATIWREKVGLPEERIQRRGKADNFWSMGVPGPCGPCSEIYFDRGPEYGAEGGPVADEDRYLEVWNLVFMQFERGEGSGKEDYPILGELPSKNIDTGMGLERMAAILQGVDNIYETDTLGRILRRAAELTGTTYGENERADVSLRVIADHVRTATMLVADGVRPGNEKRGYVLRRILRRSIRNLRLLSGDESFHMHDLTAVAIDAMGDQYPELRADADKIHSIIDAEEKNFADTLRAGTTLFNRAVRRTKETGGTVFSGADAFQLHDTYGFPIDLTLEMAAEHGLKVDEETFHQLMQRQRETAKRDAQAKKLGNADISVYGNLLETGGPTEFLGYTDSESEARVLGIIVNGESTGAARKGDQVELVLDRTPFYAESGGQLADKGTITVDGRGVVDVEDVQKPIQGLFVHRGTVREGEVVVDDTVHAAIDTGRRASVSRSHSATHLIHSALRNTLGPSAGQAGSENQPGRLRFDFTSDKPLDATEIAQVEEEVNEVLARNIEVQYLETTLDEALRMGALAMFGEKYGNRVRVVDMTEYSRELCGGTHVAATGQLGLVKVLGESSVGSGVRRVEALVGLDALRRVSTESALVGQLSEQLKAPREELPQRIDSLVSRLRAAEKEIERLRAAQVLQAAGKLAESARDHGNSRVVTHRVEDGTTADDMRKLALDVRGRLGEDRPAVVAIAGVPSDRPVVVVAINKEAQQAGLKAGELVGVAARALGGGGGGRPDIAQGGGSDVTAIDTALRLVEQRVAGS.

4 residues coordinate Zn(2+): H574, H578, C676, and H680.

This sequence belongs to the class-II aminoacyl-tRNA synthetase family. Zn(2+) serves as cofactor.

It is found in the cytoplasm. The enzyme catalyses tRNA(Ala) + L-alanine + ATP = L-alanyl-tRNA(Ala) + AMP + diphosphate. Its function is as follows. Catalyzes the attachment of alanine to tRNA(Ala) in a two-step reaction: alanine is first activated by ATP to form Ala-AMP and then transferred to the acceptor end of tRNA(Ala). Also edits incorrectly charged Ser-tRNA(Ala) and Gly-tRNA(Ala) via its editing domain. The protein is Alanine--tRNA ligase of Thermobifida fusca (strain YX).